A 276-amino-acid polypeptide reads, in one-letter code: Phosphonates import ATP-binding protein PhnC (276 aa).

The ABC transporter domain maps to 2–246; sequence LEIHNLQKSY…VLTRIYGAED (245 aa). 35–42 provides a ligand contact to ATP; the sequence is GPSGAGKS.

It belongs to the ABC transporter superfamily. Phosphonates importer (TC 3.A.1.9.1) family. The complex is composed of two ATP-binding proteins (PhnC), two transmembrane proteins (PhnE) and a solute-binding protein (PhnD).

The protein resides in the cell inner membrane. It carries out the reaction phosphonate(out) + ATP + H2O = phosphonate(in) + ADP + phosphate + H(+). Its function is as follows. Part of the ABC transporter complex PhnCDE involved in phosphonates import. Responsible for energy coupling to the transport system. The protein is Phosphonates import ATP-binding protein PhnC of Alcaligenes faecalis.